We begin with the raw amino-acid sequence, 595 residues long: Adenine deaminase 3 (595 aa).

The protein belongs to the metallo-dependent hydrolases superfamily. Adenine deaminase family. Requires Mn(2+) as cofactor.

The catalysed reaction is adenine + H2O + H(+) = hypoxanthine + NH4(+). The chain is Adenine deaminase 3 from Rhizobium meliloti (strain 1021) (Ensifer meliloti).